Reading from the N-terminus, the 305-residue chain is Probable lipid kinase YegS-like (305 aa).

The region spanning 2-134 (HPPAPALLII…DLAKVNDQRY (133 aa)) is the DAGKc domain. ATP-binding positions include Thr40, 66-72 (GDGTINE), and Thr95. Mg(2+) is bound by residues Leu215, Asp218, and Leu220. Glu271 (proton acceptor) is an active-site residue.

This sequence belongs to the diacylglycerol/lipid kinase family. YegS lipid kinase subfamily. Requires Mg(2+) as cofactor. The cofactor is Ca(2+).

Its subcellular location is the cytoplasm. In terms of biological role, probably phosphorylates lipids; the in vivo substrate is unknown. In Serratia proteamaculans (strain 568), this protein is Probable lipid kinase YegS-like.